Reading from the N-terminus, the 573-residue chain is Phosphoenolpyruvate-protein phosphotransferase (573 aa).

Residue H190 is the Tele-phosphohistidine intermediate of the active site. Phosphoenolpyruvate contacts are provided by R297 and R332. 2 residues coordinate Mg(2+): E431 and D455. Phosphoenolpyruvate-binding positions include N454–D455 and R465. The active-site Proton donor is the C502.

It belongs to the PEP-utilizing enzyme family. Homodimer. Requires Mg(2+) as cofactor.

It is found in the cytoplasm. It carries out the reaction L-histidyl-[protein] + phosphoenolpyruvate = N(pros)-phospho-L-histidyl-[protein] + pyruvate. With respect to regulation, irreversibly inhibited the sulfhydryl reagent N-ethylmaleimide (NEM). In terms of biological role, general (non sugar-specific) component of the phosphoenolpyruvate-dependent sugar phosphotransferase system (sugar PTS). This major carbohydrate active-transport system catalyzes the phosphorylation of incoming sugar substrates concomitantly with their translocation across the cell membrane. Enzyme I transfers the phosphoryl group from phosphoenolpyruvate (PEP) to the phosphoryl carrier protein (HPr). This Mycoplasma capricolum subsp. capricolum (strain California kid / ATCC 27343 / NCTC 10154) protein is Phosphoenolpyruvate-protein phosphotransferase (ptsI).